We begin with the raw amino-acid sequence, 228 residues long: Deoxyguanosine kinase (228 aa).

8–16 (GPIGAGKSS) is a binding site for ATP. The substrate site is built by E32, Y44, and Q55. Residue D78 is the Proton acceptor of the active site. 3 residues coordinate substrate: R79, D84, and E149.

The protein belongs to the DCK/DGK family. In terms of assembly, heterodimer of a deoxyadenosine (DAK) and a deoxyguanosine kinase (DGK).

It carries out the reaction 2'-deoxyguanosine + ATP = dGMP + ADP + H(+). Its function is as follows. DGK/DAK plays an essential role in generating the deoxyribonucleotide precursors, dGTP and dATP, for DNA metabolism. This is Deoxyguanosine kinase from Lactobacillus acidophilus (strain ATCC 700396 / NCK56 / N2 / NCFM).